Reading from the N-terminus, the 1079-residue chain is Intraflagellar transport protein 80 (1079 aa).

Positions 495–514 are disordered; the sequence is GDMIRPSTVQNQPSTQGLPN. Residues 501-514 show a composition bias toward polar residues; that stretch reads STVQNQPSTQGLPN.

It is found in the cell projection. It localises to the cilium. Its subcellular location is the flagellum. The protein localises to the cytoplasm. The protein resides in the cytoskeleton. It is found in the flagellum axoneme. It localises to the flagellum basal body. Functionally, component of the intraflagellar transport complex B (IFT-B) involved in flagellar assembly. This Giardia intestinalis (strain ATCC 50803 / WB clone C6) (Giardia lamblia) protein is Intraflagellar transport protein 80.